The following is a 498-amino-acid chain: ATP synthase subunit beta, chloroplastic (498 aa).

172–179 (GGAGVGKT) lines the ATP pocket.

Belongs to the ATPase alpha/beta chains family. As to quaternary structure, F-type ATPases have 2 components, CF(1) - the catalytic core - and CF(0) - the membrane proton channel. CF(1) has five subunits: alpha(3), beta(3), gamma(1), delta(1), epsilon(1). CF(0) has four main subunits: a(1), b(1), b'(1) and c(9-12).

It is found in the plastid. Its subcellular location is the chloroplast thylakoid membrane. The catalysed reaction is ATP + H2O + 4 H(+)(in) = ADP + phosphate + 5 H(+)(out). Produces ATP from ADP in the presence of a proton gradient across the membrane. The catalytic sites are hosted primarily by the beta subunits. The polypeptide is ATP synthase subunit beta, chloroplastic (Buxus microphylla (Littleleaf boxwood)).